The chain runs to 361 residues: DNA replication and repair protein RecF (361 aa).

An ATP-binding site is contributed by 30 to 37 (GANGSGKT).

Belongs to the RecF family.

The protein localises to the cytoplasm. Functionally, the RecF protein is involved in DNA metabolism; it is required for DNA replication and normal SOS inducibility. RecF binds preferentially to single-stranded, linear DNA. It also seems to bind ATP. The chain is DNA replication and repair protein RecF from Chromohalobacter salexigens (strain ATCC BAA-138 / DSM 3043 / CIP 106854 / NCIMB 13768 / 1H11).